Reading from the N-terminus, the 242-residue chain is E3 ubiquitin-protein ligase AIRP2 (242 aa).

An RING-type zinc finger spans residues 146-184 (CGICLEIRNKVVLPTCNHSMCINCYRNWRARSQSCPFCR).

Interacts with ATP1/SDIRIP1. In terms of tissue distribution, expressed in germinating seeds, flower organs and siliques.

It localises to the cytoplasm. It is found in the cytosol. It carries out the reaction S-ubiquitinyl-[E2 ubiquitin-conjugating enzyme]-L-cysteine + [acceptor protein]-L-lysine = [E2 ubiquitin-conjugating enzyme]-L-cysteine + N(6)-ubiquitinyl-[acceptor protein]-L-lysine.. Its function is as follows. Possesses E3 ubiquitin-protein ligase activity in vitro when associated with the E2 enzyme UBC8 in vitro. Plays combinatory roles with AIRP1 in the positive regulation of the abscisic acid-mediated drought stress response. Plays a positive role in abscisic acid- and high salinity-regulated seed germination through the ubiquitin-proteasome-dependent down-regulation of ATP1/SDIRIP1. This is E3 ubiquitin-protein ligase AIRP2 from Arabidopsis thaliana (Mouse-ear cress).